The following is a 384-amino-acid chain: S-adenosylmethionine synthase (384 aa).

ATP is bound at residue His15. Asp17 serves as a coordination point for Mg(2+). Glu43 contributes to the K(+) binding site. Residues Glu56 and Gln99 each coordinate L-methionine. Residues Gln99–Arg109 are flexible loop. Residues Asp164–Lys166, Arg230–Phe231, Asp239, Arg245–Lys246, Ala262, and Lys266 each bind ATP. Asp239 serves as a coordination point for L-methionine. L-methionine is bound at residue Lys270.

It belongs to the AdoMet synthase family. In terms of assembly, homotetramer; dimer of dimers. Mg(2+) serves as cofactor. The cofactor is K(+).

Its subcellular location is the cytoplasm. It carries out the reaction L-methionine + ATP + H2O = S-adenosyl-L-methionine + phosphate + diphosphate. It functions in the pathway amino-acid biosynthesis; S-adenosyl-L-methionine biosynthesis; S-adenosyl-L-methionine from L-methionine: step 1/1. Catalyzes the formation of S-adenosylmethionine (AdoMet) from methionine and ATP. The overall synthetic reaction is composed of two sequential steps, AdoMet formation and the subsequent tripolyphosphate hydrolysis which occurs prior to release of AdoMet from the enzyme. The sequence is that of S-adenosylmethionine synthase from Haemophilus influenzae (strain PittEE).